Consider the following 415-residue polypeptide: Squalene synthase clz20 (415 aa).

The N-linked (GlcNAc...) asparagine glycan is linked to asparagine 114. A helical membrane pass occupies residues 395-415 (ADTMYLAVLVLGVFGVVAAIL).

This sequence belongs to the phytoene/squalene synthase family. The cofactor is Mg(2+).

Its subcellular location is the membrane. It carries out the reaction 2 (2E,6E)-farnesyl diphosphate + NADH + H(+) = squalene + 2 diphosphate + NAD(+). The enzyme catalyses 2 (2E,6E)-farnesyl diphosphate + NADPH + H(+) = squalene + 2 diphosphate + NADP(+). It participates in terpene metabolism; lanosterol biosynthesis; lanosterol from farnesyl diphosphate: step 1/3. In terms of biological role, squalene synthase; part of the gene cluster that mediates the biosynthesis of squalestatin S1 (SQS1, also known as zaragozic acid A), a heavily oxidized fungal polyketide that offers potent cholesterol lowering activity by targeting squalene synthase (SS). Catalyzes the condensation of 2 two farnesyl pyrophosphate moieties to form squalene. The presence of a gene encoding a squalene synthase supports the identification of the cluster as being responsible for SQS1 production and suggests a likely mechanism for self-resistance. In Cochliobolus lunatus (Filamentous fungus), this protein is Squalene synthase clz20.